The sequence spans 240 residues: Probable transcriptional regulatory protein HPP12_0160 (240 aa).

The protein belongs to the TACO1 family.

It is found in the cytoplasm. The chain is Probable transcriptional regulatory protein HPP12_0160 from Helicobacter pylori (strain P12).